The primary structure comprises 397 residues: Na(+)/H(+) antiporter NhaA (397 aa).

12 helical membrane passes run 14–34, 36–56, 59–79, 95–115, 125–145, 154–174, 177–197, 204–224, 254–274, 292–312, 328–348, and 365–385; these read ASGILLLTFAMFAMLFANTPL, DLYFDFLSMPVSIQIGLFSIY, LLMWVNDGFMAVFFVLIGLEV, IFPAIGALGGMIVPALVFTLI, GWAIPMATDIAFALGVLGLLG, IFLLALAIIDDLGAIVVIAIF, HELSTTALISAAIAIAVLIIM, AICAYMVVGLILWASVLKSGV, LLAPWCSFVILPLFAFSNAGV, VALGLLVGKTLGVFSFSFLAV, IFAVSVLCGIGFTMSMFLAGL, and LGILIGSGISAVLGYYLLKLC.

Belongs to the NhaA Na(+)/H(+) (TC 2.A.33) antiporter family.

Its subcellular location is the cell inner membrane. The catalysed reaction is Na(+)(in) + 2 H(+)(out) = Na(+)(out) + 2 H(+)(in). Functionally, na(+)/H(+) antiporter that extrudes sodium in exchange for external protons. This is Na(+)/H(+) antiporter NhaA from Glaesserella parasuis serovar 5 (strain SH0165) (Haemophilus parasuis).